The following is a 132-amino-acid chain: Putative apolipoprotein(a)-like protein 2 (132 aa).

Residues 1–21 form the signal peptide; it reads MEHKEVVLLLLLFLKSAPTET. Positions 27–105 constitute a Kringle domain; it reads ECYHSNGQSY…RWEYCNLTRC (79 aa). 3 disulfide bridges follow: C28–C105, C49–C88, and C77–C100. N101 carries an N-linked (GlcNAc...) asparagine glycan.

In terms of tissue distribution, expressed in liver but not in other tissues tested.

The protein localises to the secreted. This is Putative apolipoprotein(a)-like protein 2 (LPAL2) from Homo sapiens (Human).